We begin with the raw amino-acid sequence, 378 residues long: Carbazole 1,9a-dioxygenase, terminal oxygenase component CarAa (378 aa).

The Rieske domain occupies 29–135 (WYPVRLASEI…VEEAKGLIFV (107 aa)). [2Fe-2S] cluster contacts are provided by Cys-69, His-71, Cys-90, and His-93.

In terms of assembly, homotrimer. Carbazole 1,9a-dioxygenase complex consists of a terminal oxygenase component CarAa, a ferredoxin reductase component fdr and a ferredoxin component CarAc. [2Fe-2S] cluster serves as cofactor.

It catalyses the reaction 9H-carbazole + NADH + O2 + H(+) = 2'-aminobiphenyl-2,3-diol + NAD(+). The catalysed reaction is 9H-carbazole + NADPH + O2 + H(+) = 2'-aminobiphenyl-2,3-diol + NADP(+). Functionally, part of the multicomponent carbazole 1,9a-dioxygenase (CARDO), that converts carbazole (CAR) into 2-aminobiphenyl-2,3-diol. Catalyzes the dioxygenation at the angular (C-9a) and adjacent (C-1) positions of carbazole to yield a highly unstable cis-hydrodiol intermediate which is spontaneously converted to 2-aminobiphenyl-2,3-diol. The sequence is that of Carbazole 1,9a-dioxygenase, terminal oxygenase component CarAa (carAa) from Sphingomonas sp.